Reading from the N-terminus, the 173-residue chain is Alpha-crystallin A chain (173 aa).

M1 is modified (N-acetylmethionine). Positions 1-63 (MDIAIQHPWF…RSVLDSGISE (63 aa)) are required for complex formation with BFSP1 and BFSP2. The residue at position 6 (Q6) is a Deamidated glutamine; partial. S45 carries the post-translational modification Phosphoserine. Q50 bears the Deamidated glutamine; partial mark. The sHSP domain occupies 52–162 (LFRSVLDSGI…GHSERAIPVS (111 aa)). Position 70 is an N6-acetyllysine (K70). Deamidated glutamine; partial is present on Q90. Position 99 is an N6-acetyllysine (K99). H100 contributes to the Zn(2+) binding site. N101 is subject to Deamidated asparagine; partial. E102 and H107 together coordinate Zn(2+). At S122 the chain carries Phosphoserine. Position 123 is a deamidated asparagine; partial (N123). A disordered region spans residues 144–173 (PKVTSGMDAGHSERAIPVSREEKPSSAPSS). Basic and acidic residues predominate over residues 153 to 167 (GHSERAIPVSREEKP). Zn(2+) is bound at residue H154. S162 carries O-linked (GlcNAc) serine glycosylation.

This sequence belongs to the small heat shock protein (HSP20) family. As to quaternary structure, heteromer composed of three CRYAA and one CRYAB subunits. Inter-subunit bridging via zinc ions enhances stability, which is crucial as there is no protein turn over in the lens. Can also form homodimers and homotetramers (dimers of dimers) which serve as the building blocks of homooligomers. Within homooligomers, the zinc-binding motif is created from residues of 3 different molecules. His-100 and Glu-102 from one molecule are ligands of the zinc ion, and His-107 and His-154 residues from additional molecules complete the site with tetrahedral coordination geometry. Part of a complex required for lens intermediate filament formation composed of BFSP1, BFSP2 and CRYAA. In terms of processing, acetylation at Lys-70 may increase chaperone activity. Post-translationally, undergoes age-dependent proteolytical cleavage at the C-terminus.

The protein resides in the cytoplasm. Its subcellular location is the nucleus. Contributes to the transparency and refractive index of the lens. Acts as a chaperone, preventing aggregation of various proteins under a wide range of stress conditions. Required for the correct formation of lens intermediate filaments as part of a complex composed of BFSP1, BFSP2 and CRYAA. The protein is Alpha-crystallin A chain (CRYAA) of Phocoena phocoena (Harbor porpoise).